Consider the following 98-residue polypeptide: NADH-ubiquinone oxidoreductase chain 4L (98 aa).

Helical transmembrane passes span 1–21 (MSLV…GLLM), 30–50 (LLCL…TILT), and 61–81 (IVLL…LVMV).

The protein belongs to the complex I subunit 4L family. Core subunit of respiratory chain NADH dehydrogenase (Complex I) which is composed of 45 different subunits.

Its subcellular location is the mitochondrion inner membrane. The enzyme catalyses a ubiquinone + NADH + 5 H(+)(in) = a ubiquinol + NAD(+) + 4 H(+)(out). Functionally, core subunit of the mitochondrial membrane respiratory chain NADH dehydrogenase (Complex I) which catalyzes electron transfer from NADH through the respiratory chain, using ubiquinone as an electron acceptor. Part of the enzyme membrane arm which is embedded in the lipid bilayer and involved in proton translocation. The protein is NADH-ubiquinone oxidoreductase chain 4L (MT-ND4L) of Crocidura russula (Greater white-toothed shrew).